We begin with the raw amino-acid sequence, 387 residues long: F-box protein At5g41490 (387 aa).

Positions 2–47 constitute an F-box domain; it reads ATMITNLRRDLIEEIISRVPLRSMKAVRLTCKSWNNISKSEIFTKM.

The polypeptide is F-box protein At5g41490 (Arabidopsis thaliana (Mouse-ear cress)).